Consider the following 124-residue polypeptide: Urease subunit beta (124 aa).

This sequence belongs to the urease beta subunit family. Heterotrimer of UreA (gamma), UreB (beta) and UreC (alpha) subunits. Three heterotrimers associate to form the active enzyme.

Its subcellular location is the cytoplasm. The enzyme catalyses urea + 2 H2O + H(+) = hydrogencarbonate + 2 NH4(+). It functions in the pathway nitrogen metabolism; urea degradation; CO(2) and NH(3) from urea (urease route): step 1/1. The sequence is that of Urease subunit beta from Ureaplasma parvum serovar 3 (strain ATCC 27815 / 27 / NCTC 11736).